The chain runs to 568 residues: Probable asparagine--tRNA ligase, cytoplasmic (568 aa).

This sequence belongs to the class-II aminoacyl-tRNA synthetase family.

It is found in the cytoplasm. It carries out the reaction tRNA(Asn) + L-asparagine + ATP = L-asparaginyl-tRNA(Asn) + AMP + diphosphate + H(+). Its function is as follows. Cytosolic asparaginyl-tRNA synthetase which catalyzes the specific attachment of asparagine to its cognate tRNA. The sequence is that of Probable asparagine--tRNA ligase, cytoplasmic (nrs1) from Schizosaccharomyces pombe (strain 972 / ATCC 24843) (Fission yeast).